A 429-amino-acid chain; its full sequence is Histidinol dehydrogenase (429 aa).

Residues Tyr127, Gln188, and Asn211 each coordinate NAD(+). Ser234, Gln256, and His259 together coordinate substrate. Zn(2+) is bound by residues Gln256 and His259. Residues Glu324 and His325 each act as proton acceptor in the active site. The substrate site is built by His325, Asp358, Glu412, and His417. Residue Asp358 coordinates Zn(2+). Zn(2+) is bound at residue His417.

This sequence belongs to the histidinol dehydrogenase family. Zn(2+) serves as cofactor.

The enzyme catalyses L-histidinol + 2 NAD(+) + H2O = L-histidine + 2 NADH + 3 H(+). It functions in the pathway amino-acid biosynthesis; L-histidine biosynthesis; L-histidine from 5-phospho-alpha-D-ribose 1-diphosphate: step 9/9. Its function is as follows. Catalyzes the sequential NAD-dependent oxidations of L-histidinol to L-histidinaldehyde and then to L-histidine. This chain is Histidinol dehydrogenase, found in Bacillus anthracis.